Consider the following 555-residue polypeptide: Inorganic phosphate transporter 1-11 (555 aa).

The Cytoplasmic segment spans residues 1-28; it reads MADADGGSNLAVLDALDSARTQMYHMKA. The chain crosses the membrane as a helical span at residues 29–49; the sequence is IVIAGMGFFTDAYDLFCISTV. Residues 50-77 are Extracellular-facing; the sequence is SKLLGRLYYQPDGSTDSKPGALSKTANN. Residues 78–98 form a helical membrane-spanning segment; the sequence is MVIGVALVGTLMGQLVFGYFG. The Cytoplasmic portion of the chain corresponds to 99 to 105; that stretch reads DKLGRKR. A helical transmembrane segment spans residues 106-126; the sequence is VYGVTLILMAACAIGSGLSFG. Topologically, residues 127 to 130 are extracellular; that stretch reads SSRK. A helical transmembrane segment spans residues 131 to 151; sequence AVIGTLCFFRFWLGFGIGGDY. At 152–167 the chain is on the cytoplasmic side; sequence PLSATIMSEYSNKKTR. Residues 168-188 form a helical membrane-spanning segment; sequence GAFIAAVFAMQGVGIIFAGLV. Residues 189 to 216 are Extracellular-facing; it reads SMIVSSIFLTYNKAPSYKGNHDLSRQMP. Residues 217-237 traverse the membrane as a helical segment; that stretch reads AADYVWRIVLMIGAFPALATF. Over 238–298 the chain is Cytoplasmic; that stretch reads YWRMKMPETA…PLLSMEFARR (61 aa). A helical transmembrane segment spans residues 299–319; that stretch reads HGLHLIGTTTTWFLLDIAFYS. Residues 320–351 are Extracellular-facing; it reads QNLTQKDIFPAMGLISGAAEVNALTEMFQISK. The helical transmembrane segment at 352–372 threads the bilayer; it reads ASFLVALLGTFPGYWVTVALI. Over 373-377 the chain is Cytoplasmic; that stretch reads DKMGR. A helical transmembrane segment spans residues 378 to 398; sequence YMIQLIGFFMMSMFMLAMGIL. Over 399-408 the chain is Extracellular; it reads YDYLKTHHFL. A helical membrane pass occupies residues 409–436; that stretch reads FGLLYALTFFFANFGPNSTTFVLPAELF. At 437 to 442 the chain is on the cytoplasmic side; sequence PTRVRS. A helical transmembrane segment spans residues 443–463; it reads TCHAISAAAGKAGAIVAAFGI. Topologically, residues 464 to 477 are extracellular; it reads QKLTYNSQVKSIKK. The helical transmembrane segment at 478 to 498 threads the bilayer; the sequence is ALIILSITNMLGFFFTFLVPE. The Cytoplasmic segment spans residues 499–555; it reads TMGRSLEEISGEDGNTGAGGGGAPAAANAGVGVSASDVSRDEKFPASSTEWQTSMHA. The disordered stretch occupies residues 506-555; sequence EISGEDGNTGAGGGGAPAAANAGVGVSASDVSRDEKFPASSTEWQTSMHA. The segment covering 512 to 521 has biased composition (gly residues); it reads GNTGAGGGGA. Low complexity predominate over residues 522 to 535; it reads PAAANAGVGVSASD. Residues 544–555 show a composition bias toward polar residues; that stretch reads ASSTEWQTSMHA.

The protein belongs to the major facilitator superfamily. Phosphate:H(+) symporter (TC 2.A.1.9) family.

The protein resides in the membrane. Its function is as follows. Symbiosis-specific regulated inorganic phosphate (Pi) transporter. Probably involved in symbiosis-mediated Pi uptake in roots colonized by myccorhizal fungi. This chain is Inorganic phosphate transporter 1-11 (PHT1-11), found in Oryza sativa subsp. japonica (Rice).